The primary structure comprises 930 residues: APC membrane recruitment protein 1 (930 aa).

Disordered regions lie at residues 1-33 (MEIA…PPSV), 55-76 (FFGG…TKSQ), 104-133 (CSEP…LFSS), 161-193 (TVPG…NQTT), 222-245 (EMDK…RQEG), and 366-454 (EVCY…PRDS). Basic and acidic residues predominate over residues 222 to 242 (EMDKRRRAEEEGIGEDEKTGR). 2 stretches are compositionally biased toward polar residues: residues 377 to 399 (DSPS…SSPM) and 413 to 424 (SPQSDRQESVPN). Basic and acidic residues predominate over residues 439 to 452 (EESRERPHQERLPR).

The protein belongs to the Amer family.

The protein localises to the cytoplasm. The protein resides in the cell membrane. It is found in the nucleus. Regulator of the canonical Wnt signaling pathway. Acts by specifically binding phosphatidylinositol 4,5-bisphosphate (PtdIns(4,5)P2), translocating to the cell membrane and interacting with key regulators of the canonical Wnt signaling pathway, such as components of the beta-catenin destruction complex. Acts both as a positive and negative regulator of the Wnt signaling pathway, depending on the context. This Danio rerio (Zebrafish) protein is APC membrane recruitment protein 1 (amer1).